The primary structure comprises 208 residues: ATP-dependent Clp protease proteolytic subunit (208 aa).

Residue serine 98 is the Nucleophile of the active site. Residue histidine 123 is part of the active site.

It belongs to the peptidase S14 family. Fourteen ClpP subunits assemble into 2 heptameric rings which stack back to back to give a disk-like structure with a central cavity, resembling the structure of eukaryotic proteasomes.

It is found in the cytoplasm. The catalysed reaction is Hydrolysis of proteins to small peptides in the presence of ATP and magnesium. alpha-casein is the usual test substrate. In the absence of ATP, only oligopeptides shorter than five residues are hydrolyzed (such as succinyl-Leu-Tyr-|-NHMec, and Leu-Tyr-Leu-|-Tyr-Trp, in which cleavage of the -Tyr-|-Leu- and -Tyr-|-Trp bonds also occurs).. Cleaves peptides in various proteins in a process that requires ATP hydrolysis. Has a chymotrypsin-like activity. Plays a major role in the degradation of misfolded proteins. The polypeptide is ATP-dependent Clp protease proteolytic subunit (Wolbachia sp. subsp. Drosophila simulans (strain wRi)).